The chain runs to 349 residues: MDTIAARALTVMRACATLQEARIVLEANVMEILGIAINRYNGLTLRGVTMRPTSLAQRNEMFFMCLDMMLSAAGINVGPISPDYTQHMATIGVLATPEIPFTTEAANEIARVTGETSTWGPARQPYGFFLETEETFQPGRWFMRAAQAVTAVVCGPDMIQVSLNAGARGDVQQIFQGRNDPMMIYLVWRRIENFAMAQGNSQQTQAGVTVSVGGVDMRAGRIIAWDGQAALHVHNPTQQNAMVQIQVVFYISMDKTLNQYPALTAEIFNVYSFRDHTWHGLRTAILNRTTLPNMLPPIFPPNDRDSILTLLLLSTLADVYTVLRPEFAIHGVNPMPGPLTRAIARAAYV.

The N-linked (GlcNAc...) asparagine; by host glycan is linked to Asn-287.

The protein belongs to the orbivirus VP7 family. As to quaternary structure, homotrimer that assemble in a complex of 260 capsomers on an inner scaffold composed of VP3.

Its subcellular location is the virion. Functionally, the VP7 protein is one of the five proteins (with VP1, VP3, VP4, and VP6) which form the inner capsid of the virus. This Antilocapra americana (Pronghorn) protein is Core protein VP7 (Segment-7).